A 740-amino-acid polypeptide reads, in one-letter code: MPKYKHVEDILKIMRNVEQVRNIGIIAHVDHGKTTTSDALLAHAGILSPKLAGEARALDYLDVEQQRGITVKAANVSLYHEYKGKPYVINLIDTPGHVDFSGKVTRSLRVLDGAILVVDAVEGVMTQTETVLRQALEELVRPLLFINKVDRLIKELKLSPQEIQQRIVQIIKDVNERILTFAPDPEIAKKWLLDPAKGHVALGSAKDKWGITIPMAQEKGIKFSDIVEAYAKGSKDAIEELFHKAPLHETLLDMVVRWVPNPREAQKYRVPRLWKGDINSELGKAMLNCDPEGPLVVFINDMRLDPHTKRLVATGRVWAGTATAGKEVWLVNAQKPGKILQVSIYMGPDREIVDYVTAGNIVAMLGLDDARAGETLVDINYKDQAAPFEQLHYVSEPVVTVAIEPKNPRDLPKLIEALRTLSIEDPNLKVTINQETGEYLLSGMGMLHIEIALTQLKEVYGLEVKVSPPVITYRETVRKPGEKVEGKSPNKHNKLYITVEPLEKEVIEMIQKGEITDDQDPRERAKVLRDKVNWDADTARRIWAVDEENFNIFIDKTVGVQHLREVKDTILAGWRLAMKEGPLAKEPVRGVKVILWDAVIHEDPAHRGPAQLYPAVRNAVYASMLTDSPTLLEPWQKLDIRVPNEYIGAVTGVITKHRGKILEVIDMGGQARIVAAVPIAESFELPMELRSVTAGRAFWGTEFYGWEPVPDQLLPELIRKIRERKGLPPEPPKAEDFLGP.

The 246-residue stretch at E18 to R263 folds into the tr-type G domain. GTP is bound by residues A27–T34, D93–H97, and N147–D150. The residue at position 606 (H606) is a Diphthamide.

Belongs to the TRAFAC class translation factor GTPase superfamily. Classic translation factor GTPase family. EF-G/EF-2 subfamily.

Its subcellular location is the cytoplasm. In terms of biological role, catalyzes the GTP-dependent ribosomal translocation step during translation elongation. During this step, the ribosome changes from the pre-translocational (PRE) to the post-translocational (POST) state as the newly formed A-site-bound peptidyl-tRNA and P-site-bound deacylated tRNA move to the P and E sites, respectively. Catalyzes the coordinated movement of the two tRNA molecules, the mRNA and conformational changes in the ribosome. This is Elongation factor 2 from Ignicoccus hospitalis (strain KIN4/I / DSM 18386 / JCM 14125).